Reading from the N-terminus, the 145-residue chain is D-aminoacyl-tRNA deacylase (145 aa).

The Gly-cisPro motif, important for rejection of L-amino acids motif lies at 137-138; sequence GP.

It belongs to the DTD family. As to quaternary structure, homodimer.

Its subcellular location is the cytoplasm. It catalyses the reaction glycyl-tRNA(Ala) + H2O = tRNA(Ala) + glycine + H(+). The enzyme catalyses a D-aminoacyl-tRNA + H2O = a tRNA + a D-alpha-amino acid + H(+). In terms of biological role, an aminoacyl-tRNA editing enzyme that deacylates mischarged D-aminoacyl-tRNAs. Also deacylates mischarged glycyl-tRNA(Ala), protecting cells against glycine mischarging by AlaRS. Acts via tRNA-based rather than protein-based catalysis; rejects L-amino acids rather than detecting D-amino acids in the active site. By recycling D-aminoacyl-tRNA to D-amino acids and free tRNA molecules, this enzyme counteracts the toxicity associated with the formation of D-aminoacyl-tRNA entities in vivo and helps enforce protein L-homochirality. The polypeptide is D-aminoacyl-tRNA deacylase (Pseudomonas aeruginosa (strain UCBPP-PA14)).